The primary structure comprises 210 residues: 3-hexulose-6-phosphate synthase 3 (210 aa).

The protein belongs to the HPS/KGPDC family. HPS subfamily.

The catalysed reaction is D-ribulose 5-phosphate + formaldehyde = D-arabino-hex-3-ulose 6-phosphate. It functions in the pathway one-carbon metabolism; formaldehyde assimilation via RuMP pathway; D-fructose 6-phosphate from D-ribulose 5-phosphate and formaldehyde: step 1/2. Catalyzes the condensation of ribulose 5-phosphate with formaldehyde to form 3-hexulose 6-phosphate. This chain is 3-hexulose-6-phosphate synthase 3, found in Staphylococcus saprophyticus subsp. saprophyticus (strain ATCC 15305 / DSM 20229 / NCIMB 8711 / NCTC 7292 / S-41).